The following is a 154-amino-acid chain: MKEAPVIKLRELLNLLPHRYPFLLVDKVLSYDLEKRSIVAQKNVTINEPFFVGHFPEVPIMPGVLILESLAQAAGVLLGLVLENDRNKRLALFLGIQKAKFRQAVRPGDILTLSAEFSLISSKGGKASARACVGSQVAAEGELSFALVDKQSLD.

The active site involves H54.

This sequence belongs to the thioester dehydratase family. FabZ subfamily.

The protein localises to the cytoplasm. It catalyses the reaction a (3R)-hydroxyacyl-[ACP] = a (2E)-enoyl-[ACP] + H2O. In terms of biological role, involved in unsaturated fatty acids biosynthesis. Catalyzes the dehydration of short chain beta-hydroxyacyl-ACPs and long chain saturated and unsaturated beta-hydroxyacyl-ACPs. The polypeptide is 3-hydroxyacyl-[acyl-carrier-protein] dehydratase FabZ (Chlamydia caviae (strain ATCC VR-813 / DSM 19441 / 03DC25 / GPIC) (Chlamydophila caviae)).